The primary structure comprises 96 residues: Exodeoxyribonuclease 7 small subunit (96 aa).

The tract at residues 73–96 (RAPEQSAANDVSAPGSAEEHDHGR) is disordered.

Belongs to the XseB family. In terms of assembly, heterooligomer composed of large and small subunits.

It is found in the cytoplasm. It carries out the reaction Exonucleolytic cleavage in either 5'- to 3'- or 3'- to 5'-direction to yield nucleoside 5'-phosphates.. Its function is as follows. Bidirectionally degrades single-stranded DNA into large acid-insoluble oligonucleotides, which are then degraded further into small acid-soluble oligonucleotides. The chain is Exodeoxyribonuclease 7 small subunit from Acidothermus cellulolyticus (strain ATCC 43068 / DSM 8971 / 11B).